The chain runs to 293 residues: MKGLLSVAALSLAVSEVSAHYIFQQLSTGSTKHGVFQYIRQNTNYNSPVTDLSSNDLRCNEGGASGANTQTVTVRAGDSFTFHLDTPVYHQGPVSVYLSKAPGSASSYDGSGTWFKIKDWGPTFPGGQWTLAGSYTAQLPSCITDGEYLLRIQSLGIHNPYPAGTPQFYISCAQIKVTGGGSVNPSGVAIPGAFKATDPGYTANIYSNFNSYTVPGPSVFSCGSNGGGSSPVEPQPQPTTTLVTSTRAPVATQPAGCAVAKWGQCGGNGWTGCTTCAAGSTCNTQNAYYHQCV.

Positions 1 to 19 (MKGLLSVAALSLAVSEVSA) are cleaved as a signal peptide. 2 residues coordinate Cu(2+): histidine 20 and histidine 90. A disulfide bridge connects residues cysteine 59 and cysteine 172. O2 contacts are provided by histidine 158 and glutamine 167. A Cu(2+)-binding site is contributed by tyrosine 169. Residues 257 to 293 (CAVAKWGQCGGNGWTGCTTCAAGSTCNTQNAYYHQCV) enclose the CBM1 domain.

It belongs to the polysaccharide monooxygenase AA9 family. The cofactor is Cu(2+).

The protein resides in the secreted. It carries out the reaction [(1-&gt;4)-beta-D-glucosyl]n+m + reduced acceptor + O2 = 4-dehydro-beta-D-glucosyl-[(1-&gt;4)-beta-D-glucosyl]n-1 + [(1-&gt;4)-beta-D-glucosyl]m + acceptor + H2O.. Glucose dehydrogenase and aryl-alcohol quinone oxidoreductases regulate the oxidative degradation of cellulose since they can act as catalytically efficient electron donors for LPMO9E. In terms of biological role, lytic polysaccharide monooxygenase (LPMO) that depolymerizes crystalline and amorphous polysaccharides via the oxidation of scissile alpha- or beta-(1-4)-glycosidic bonds, yielding only C1 oxidation products. Catalysis by LPMOs requires the reduction of the active-site copper from Cu(II) to Cu(I) by a reducing agent and H(2)O(2) or O(2) as a cosubstrate. Improves the progression of lytic enzymes in delignified miscanthus cell walls. This boosting effect dependents on the cellular type which indicates contrasted recalcitrance levels in plant tissues. The protein is AA9 family lytic polysaccharide monooxygenase E of Podospora anserina (strain S / ATCC MYA-4624 / DSM 980 / FGSC 10383) (Pleurage anserina).